Reading from the N-terminus, the 452-residue chain is Probable glycine dehydrogenase (decarboxylating) subunit 1 (452 aa).

This sequence belongs to the GcvP family. N-terminal subunit subfamily. As to quaternary structure, the glycine cleavage system is composed of four proteins: P, T, L and H. In this organism, the P 'protein' is a heterodimer of two subunits.

It catalyses the reaction N(6)-[(R)-lipoyl]-L-lysyl-[glycine-cleavage complex H protein] + glycine + H(+) = N(6)-[(R)-S(8)-aminomethyldihydrolipoyl]-L-lysyl-[glycine-cleavage complex H protein] + CO2. Functionally, the glycine cleavage system catalyzes the degradation of glycine. The P protein binds the alpha-amino group of glycine through its pyridoxal phosphate cofactor; CO(2) is released and the remaining methylamine moiety is then transferred to the lipoamide cofactor of the H protein. This Sphingopyxis alaskensis (strain DSM 13593 / LMG 18877 / RB2256) (Sphingomonas alaskensis) protein is Probable glycine dehydrogenase (decarboxylating) subunit 1.